Consider the following 224-residue polypeptide: Mammalian ependymin-related protein 1 (224 aa).

The signal sequence occupies residues 1 to 37 (MPGRAPLRTVPGALGAWLLGGLWAWTLCGLCSLGAVG). Intrachain disulfides connect Cys42–Cys172, Cys88–Cys222, and Cys113–Cys210. N-linked (GlcNAc...) asparagine glycosylation is found at Asn130 and Asn182.

Belongs to the ependymin family. In terms of assembly, homodimer. Post-translationally, N-glycosylated; the glycan contains mannose-6-phosphate moieties. In terms of tissue distribution, ubiquitous. Detected in brain, heart, skeletal muscle, kidney, testis, ovary and prostate.

It is found in the lysosome lumen. The protein localises to the secreted. In terms of biological role, binds anionic lipids and gangliosides at acidic pH. This is Mammalian ependymin-related protein 1 (EPDR1) from Homo sapiens (Human).